Consider the following 986-residue polypeptide: Ubiquitin carboxyl-terminal hydrolase 37 (986 aa).

The short motif at 32–34 (KDN) is the KEN box 1 element. Short sequence motifs (D-box) lie at residues 71 to 79 (CLMLTLKDT) and 96 to 105 (RMYLDAVHQD). Disordered stretches follow at residues 134-238 (NRQF…MSDP) and 251-305 (LKLK…KRSL). Over residues 149–159 (VTVESKDETPF) the composition is skewed to basic and acidic residues. The short motif at 160-168 (RKVLGTPAR) is the D-box 3 element. The segment covering 171 to 195 (VKNSSGTGAPSNRVNVAASPTSSVP) has biased composition (polar residues). The KEN box 2 motif lies at 224–226 (KEN). Residues 251-260 (LKLKQEEENR) are compositionally biased toward basic and acidic residues. Low complexity predominate over residues 269–298 (SSSYYGSRSSSKEYSTSSSTLDRSSVSSQT). The region spanning 344 to 958 (QGFSNLGNTC…SGYIFFYMHK (615 aa)) is the USP domain. Residue C353 is the Nucleophile of the active site. 2 disordered regions span residues 683–710 (VQRG…GFDG) and 729–751 (SLSL…GDDE). The region spanning 712-731 (SEDELLAAVLEISKREASLS) is the UIM 1 domain. Basic and acidic residues predominate over residues 729–739 (SLSLSHDEDKP). Positions 789-791 (KEN) match the KEN box 3 motif. The interval 811–840 (REREEQELQQALAQSLQEQEAREQKEDDDL) is disordered. UIM domains lie at 813–832 (REEQ…QEAR) and 835–854 (KEDD…FNSS). The span at 818 to 828 (LQQALAQSLQE) shows a compositional bias: low complexity. Residues 829-840 (QEAREQKEDDDL) are compositionally biased toward basic and acidic residues. The Proton acceptor role is filled by H913.

It belongs to the peptidase C19 family.

The catalysed reaction is Thiol-dependent hydrolysis of ester, thioester, amide, peptide and isopeptide bonds formed by the C-terminal Gly of ubiquitin (a 76-residue protein attached to proteins as an intracellular targeting signal).. Functionally, deubiquitinase that antagonizes the anaphase-promoting complex (APC/C) during G1/S transition by mediating deubiquitination of APC/C target proteins, thereby promoting S phase entry. Specifically mediates deubiquitination of 'Lys-11'-linked polyubiquitin chains, a specific ubiquitin-linkage type mediated by the APC/C complex. The protein is Ubiquitin carboxyl-terminal hydrolase 37 (USP37) of Gallus gallus (Chicken).